Reading from the N-terminus, the 352-residue chain is Histidinol-phosphate aminotransferase (352 aa).

K216 carries the N6-(pyridoxal phosphate)lysine modification.

Belongs to the class-II pyridoxal-phosphate-dependent aminotransferase family. Histidinol-phosphate aminotransferase subfamily. Requires pyridoxal 5'-phosphate as cofactor.

The enzyme catalyses L-histidinol phosphate + 2-oxoglutarate = 3-(imidazol-4-yl)-2-oxopropyl phosphate + L-glutamate. It functions in the pathway amino-acid biosynthesis; L-histidine biosynthesis; L-histidine from 5-phospho-alpha-D-ribose 1-diphosphate: step 7/9. This is Histidinol-phosphate aminotransferase from Methanoculleus marisnigri (strain ATCC 35101 / DSM 1498 / JR1).